A 389-amino-acid polypeptide reads, in one-letter code: D-alanyl-D-alanine carboxypeptidase DacF (389 aa).

The signal sequence occupies residues methionine 1–alanine 23. Catalysis depends on serine 64, which acts as the Acyl-ester intermediate. The active-site Proton acceptor is the lysine 67. The active site involves serine 124. Residue lysine 230 participates in substrate binding.

The protein belongs to the peptidase S11 family.

The protein resides in the secreted. The enzyme catalyses Preferential cleavage: (Ac)2-L-Lys-D-Ala-|-D-Ala. Also transpeptidation of peptidyl-alanyl moieties that are N-acyl substituents of D-alanine.. Its pathway is cell wall biogenesis; peptidoglycan biosynthesis. Its function is as follows. Removes C-terminal D-alanyl residues from sugar-peptide cell wall precursors. This chain is D-alanyl-D-alanine carboxypeptidase DacF (dacF), found in Bacillus subtilis (strain 168).